The primary structure comprises 503 residues: UDP-N-acetylmuramoyl-L-alanyl-D-glutamate--2,6-diaminopimelate ligase (503 aa).

Ser-32 lines the UDP-N-acetyl-alpha-D-muramoyl-L-alanyl-D-glutamate pocket. 117-123 serves as a coordination point for ATP; sequence GTNGKTT. UDP-N-acetyl-alpha-D-muramoyl-L-alanyl-D-glutamate contacts are provided by residues 159-160, Ser-186, Gln-192, and Arg-194; that span reads TT. The residue at position 226 (Lys-226) is an N6-carboxylysine. Residues Arg-396, 420 to 423, Gly-471, and Glu-475 contribute to the meso-2,6-diaminopimelate site; that span reads DNPR. Positions 420-423 match the Meso-diaminopimelate recognition motif motif; that stretch reads DNPR.

Belongs to the MurCDEF family. MurE subfamily. Requires Mg(2+) as cofactor. Carboxylation is probably crucial for Mg(2+) binding and, consequently, for the gamma-phosphate positioning of ATP.

It localises to the cytoplasm. The catalysed reaction is UDP-N-acetyl-alpha-D-muramoyl-L-alanyl-D-glutamate + meso-2,6-diaminopimelate + ATP = UDP-N-acetyl-alpha-D-muramoyl-L-alanyl-gamma-D-glutamyl-meso-2,6-diaminopimelate + ADP + phosphate + H(+). It participates in cell wall biogenesis; peptidoglycan biosynthesis. In terms of biological role, catalyzes the addition of meso-diaminopimelic acid to the nucleotide precursor UDP-N-acetylmuramoyl-L-alanyl-D-glutamate (UMAG) in the biosynthesis of bacterial cell-wall peptidoglycan. The chain is UDP-N-acetylmuramoyl-L-alanyl-D-glutamate--2,6-diaminopimelate ligase from Prochlorococcus marinus (strain SARG / CCMP1375 / SS120).